We begin with the raw amino-acid sequence, 38 residues long: Photosystem II reaction center protein L (38 aa).

Residues 17-37 (SLYWGLLCIFVLAILFSSYFF) form a helical membrane-spanning segment.

Belongs to the PsbL family. As to quaternary structure, PSII is composed of 1 copy each of membrane proteins PsbA, PsbB, PsbC, PsbD, PsbE, PsbF, PsbH, PsbI, PsbJ, PsbK, PsbL, PsbM, PsbT, PsbX, PsbY, PsbZ, Psb30/Ycf12, at least 3 peripheral proteins of the oxygen-evolving complex and a large number of cofactors. It forms dimeric complexes.

Its subcellular location is the plastid. It localises to the chloroplast thylakoid membrane. Its function is as follows. One of the components of the core complex of photosystem II (PSII). PSII is a light-driven water:plastoquinone oxidoreductase that uses light energy to abstract electrons from H(2)O, generating O(2) and a proton gradient subsequently used for ATP formation. It consists of a core antenna complex that captures photons, and an electron transfer chain that converts photonic excitation into a charge separation. This subunit is found at the monomer-monomer interface and is required for correct PSII assembly and/or dimerization. The protein is Photosystem II reaction center protein L of Cyanidioschyzon merolae (strain NIES-3377 / 10D) (Unicellular red alga).